The following is a 316-amino-acid chain: 4-hydroxy-3-methylbut-2-enyl diphosphate reductase (316 aa).

Cys-12 provides a ligand contact to [4Fe-4S] cluster. (2E)-4-hydroxy-3-methylbut-2-enyl diphosphate contacts are provided by His-43 and His-81. Dimethylallyl diphosphate is bound by residues His-43 and His-81. Positions 43 and 81 each coordinate isopentenyl diphosphate. Cys-103 lines the [4Fe-4S] cluster pocket. Position 131 (His-131) interacts with (2E)-4-hydroxy-3-methylbut-2-enyl diphosphate. His-131 provides a ligand contact to dimethylallyl diphosphate. His-131 contacts isopentenyl diphosphate. The active-site Proton donor is Glu-133. Thr-170 is a (2E)-4-hydroxy-3-methylbut-2-enyl diphosphate binding site. Position 198 (Cys-198) interacts with [4Fe-4S] cluster. Positions 226, 228, and 271 each coordinate (2E)-4-hydroxy-3-methylbut-2-enyl diphosphate. The dimethylallyl diphosphate site is built by Ser-226, Asn-228, and Ser-271. The isopentenyl diphosphate site is built by Ser-226, Asn-228, and Ser-271.

The protein belongs to the IspH family. It depends on [4Fe-4S] cluster as a cofactor.

It carries out the reaction isopentenyl diphosphate + 2 oxidized [2Fe-2S]-[ferredoxin] + H2O = (2E)-4-hydroxy-3-methylbut-2-enyl diphosphate + 2 reduced [2Fe-2S]-[ferredoxin] + 2 H(+). The catalysed reaction is dimethylallyl diphosphate + 2 oxidized [2Fe-2S]-[ferredoxin] + H2O = (2E)-4-hydroxy-3-methylbut-2-enyl diphosphate + 2 reduced [2Fe-2S]-[ferredoxin] + 2 H(+). It participates in isoprenoid biosynthesis; dimethylallyl diphosphate biosynthesis; dimethylallyl diphosphate from (2E)-4-hydroxy-3-methylbutenyl diphosphate: step 1/1. Its pathway is isoprenoid biosynthesis; isopentenyl diphosphate biosynthesis via DXP pathway; isopentenyl diphosphate from 1-deoxy-D-xylulose 5-phosphate: step 6/6. Catalyzes the conversion of 1-hydroxy-2-methyl-2-(E)-butenyl 4-diphosphate (HMBPP) into a mixture of isopentenyl diphosphate (IPP) and dimethylallyl diphosphate (DMAPP). Acts in the terminal step of the DOXP/MEP pathway for isoprenoid precursor biosynthesis. In Bacillus thuringiensis (strain Al Hakam), this protein is 4-hydroxy-3-methylbut-2-enyl diphosphate reductase.